A 234-amino-acid polypeptide reads, in one-letter code: Elongation factor Tu (234 aa).

A tr-type G domain is found at 1-125 (KNMITGAAQM…EVDAFIPTPE (125 aa)). Residue 47–50 (NKQD) participates in GTP binding.

It belongs to the TRAFAC class translation factor GTPase superfamily. Classic translation factor GTPase family. EF-Tu/EF-1A subfamily. Monomer.

It is found in the cytoplasm. The enzyme catalyses GTP + H2O = GDP + phosphate + H(+). GTP hydrolase that promotes the GTP-dependent binding of aminoacyl-tRNA to the A-site of ribosomes during protein biosynthesis. This is Elongation factor Tu (tufA) from Prochlorothrix hollandica.